Reading from the N-terminus, the 225-residue chain is Chromosome partition protein MukE (225 aa).

Residues 197–225 (RDGEAMPIENHLQLNDETEENQPDSGEEE) are disordered. Over residues 212 to 225 (DETEENQPDSGEEE) the composition is skewed to acidic residues.

It belongs to the MukE family. Interacts, and probably forms a ternary complex, with MukF and MukB. The complex formation is stimulated by calcium or magnesium.

It is found in the cytoplasm. It localises to the nucleoid. Involved in chromosome condensation, segregation and cell cycle progression. May participate in facilitating chromosome segregation by condensation DNA from both sides of a centrally located replisome during cell division. Probably acts via its interaction with MukB and MukF. The sequence is that of Chromosome partition protein MukE from Escherichia coli O157:H7.